Reading from the N-terminus, the 452-residue chain is Phosphoglucosamine mutase (452 aa).

Catalysis depends on S108, which acts as the Phosphoserine intermediate. Positions 108, 247, 249, and 251 each coordinate Mg(2+). S108 carries the post-translational modification Phosphoserine.

Belongs to the phosphohexose mutase family. Mg(2+) serves as cofactor. Post-translationally, activated by phosphorylation.

The enzyme catalyses alpha-D-glucosamine 1-phosphate = D-glucosamine 6-phosphate. Catalyzes the conversion of glucosamine-6-phosphate to glucosamine-1-phosphate. The chain is Phosphoglucosamine mutase from Burkholderia pseudomallei (strain K96243).